The sequence spans 468 residues: Putrescine aminotransferase (468 aa).

Pyridoxal 5'-phosphate contacts are provided by residues 150 to 151 (GT) and Gln274. Lys300 is subject to N6-(pyridoxal phosphate)lysine. Position 332 (Thr332) interacts with pyridoxal 5'-phosphate.

This sequence belongs to the class-III pyridoxal-phosphate-dependent aminotransferase family. Putrescine aminotransferase subfamily. Pyridoxal 5'-phosphate is required as a cofactor.

The catalysed reaction is an alkane-alpha,omega-diamine + 2-oxoglutarate = an omega-aminoaldehyde + L-glutamate. It catalyses the reaction putrescine + 2-oxoglutarate = 1-pyrroline + L-glutamate + H2O. It carries out the reaction cadaverine + 2-oxoglutarate = 5-aminopentanal + L-glutamate. It functions in the pathway amine and polyamine degradation; putrescine degradation; 4-aminobutanal from putrescine (transaminase route): step 1/1. Functionally, catalyzes the aminotransferase reaction from putrescine to 2-oxoglutarate, leading to glutamate and 4-aminobutanal, which spontaneously cyclizes to form 1-pyrroline. This is the first step in one of two pathways for putrescine degradation, where putrescine is converted into 4-aminobutanoate (gamma-aminobutyrate or GABA) via 4-aminobutanal. Also functions as a cadaverine transaminase in a a L-lysine degradation pathway to succinate that proceeds via cadaverine, glutarate and L-2-hydroxyglutarate. The sequence is that of Putrescine aminotransferase from Pectobacterium atrosepticum (strain SCRI 1043 / ATCC BAA-672) (Erwinia carotovora subsp. atroseptica).